The primary structure comprises 371 residues: UDP-N-acetylglucosamine--N-acetylmuramyl-(pentapeptide) pyrophosphoryl-undecaprenol N-acetylglucosamine transferase (371 aa).

Residues 10–12, N124, R165, S197, I251, and Q296 contribute to the UDP-N-acetyl-alpha-D-glucosamine site; that span reads TGG.

It belongs to the glycosyltransferase 28 family. MurG subfamily.

The protein localises to the cell membrane. The catalysed reaction is di-trans,octa-cis-undecaprenyl diphospho-N-acetyl-alpha-D-muramoyl-L-alanyl-D-glutamyl-meso-2,6-diaminopimeloyl-D-alanyl-D-alanine + UDP-N-acetyl-alpha-D-glucosamine = di-trans,octa-cis-undecaprenyl diphospho-[N-acetyl-alpha-D-glucosaminyl-(1-&gt;4)]-N-acetyl-alpha-D-muramoyl-L-alanyl-D-glutamyl-meso-2,6-diaminopimeloyl-D-alanyl-D-alanine + UDP + H(+). The protein operates within cell wall biogenesis; peptidoglycan biosynthesis. Functionally, cell wall formation. Catalyzes the transfer of a GlcNAc subunit on undecaprenyl-pyrophosphoryl-MurNAc-pentapeptide (lipid intermediate I) to form undecaprenyl-pyrophosphoryl-MurNAc-(pentapeptide)GlcNAc (lipid intermediate II). The polypeptide is UDP-N-acetylglucosamine--N-acetylmuramyl-(pentapeptide) pyrophosphoryl-undecaprenol N-acetylglucosamine transferase (Carboxydothermus hydrogenoformans (strain ATCC BAA-161 / DSM 6008 / Z-2901)).